Consider the following 428-residue polypeptide: Histidine--tRNA ligase (428 aa).

This sequence belongs to the class-II aminoacyl-tRNA synthetase family. In terms of assembly, homodimer.

Its subcellular location is the cytoplasm. It carries out the reaction tRNA(His) + L-histidine + ATP = L-histidyl-tRNA(His) + AMP + diphosphate + H(+). The polypeptide is Histidine--tRNA ligase (Mesomycoplasma hyopneumoniae (strain 232) (Mycoplasma hyopneumoniae)).